We begin with the raw amino-acid sequence, 432 residues long: Metacaspase-1 (432 aa).

The segment covering 1–11 (MEVMDHHHHTS) has biased composition (basic residues). 2 disordered regions span residues 1 to 21 (MEVM…TTRR) and 41 to 87 (PQPG…PNAP). Low complexity predominate over residues 12–21 (STRPNPTTRR). Pro residues predominate over residues 46 to 74 (GAPPPQGGYGYPQPPPPQQPYGYSQPPPQ). Catalysis depends on residues His-223 and Cys-279.

This sequence belongs to the peptidase C14B family.

Involved in cell death (apoptosis). The polypeptide is Metacaspase-1 (casA) (Sclerotinia sclerotiorum (strain ATCC 18683 / 1980 / Ss-1) (White mold)).